The primary structure comprises 160 residues: Serine-protein kinase RsbW (160 aa).

The protein belongs to the anti-sigma-factor family.

It catalyses the reaction L-seryl-[protein] + ATP = O-phospho-L-seryl-[protein] + ADP + H(+). The enzyme catalyses L-threonyl-[protein] + ATP = O-phospho-L-threonyl-[protein] + ADP + H(+). Negative regulator of sigma-B activity. Phosphorylates and inactivates its specific antagonist protein, RsbV. Upon phosphorylation of RsbV, RsbW is released and binds to sigma-B, thereby blocking its ability to form an RNA polymerase holoenzyme (E-sigma-B). This Bacillus cereus (strain ATCC 10987 / NRS 248) protein is Serine-protein kinase RsbW.